The following is a 312-amino-acid chain: Probable phytanoyl-CoA dioxygenase (312 aa).

Residues K84, M124, 142-144 (HQD), and W160 each bind 2-oxoglutarate. The Fe cation site is built by H142 and D144. Fe cation is bound at residue H231. 2 residues coordinate 2-oxoglutarate: S233 and R242.

Belongs to the PhyH family. Requires Fe cation as cofactor. It depends on L-ascorbate as a cofactor.

The catalysed reaction is phytanoyl-CoA + 2-oxoglutarate + O2 = 2-hydroxyphytanoyl-CoA + succinate + CO2. The protein operates within lipid metabolism; fatty acid metabolism. Functionally, converts phytanoyl-CoA to 2-hydroxyphytanoyl-CoA. This is Probable phytanoyl-CoA dioxygenase from Caenorhabditis elegans.